A 350-amino-acid polypeptide reads, in one-letter code: Phenylalanine--tRNA ligase alpha subunit (350 aa).

Glu-257 contributes to the Mg(2+) binding site.

Belongs to the class-II aminoacyl-tRNA synthetase family. Phe-tRNA synthetase alpha subunit type 1 subfamily. Tetramer of two alpha and two beta subunits. It depends on Mg(2+) as a cofactor.

It localises to the cytoplasm. It catalyses the reaction tRNA(Phe) + L-phenylalanine + ATP = L-phenylalanyl-tRNA(Phe) + AMP + diphosphate + H(+). The chain is Phenylalanine--tRNA ligase alpha subunit from Listeria monocytogenes serotype 4b (strain CLIP80459).